A 172-amino-acid chain; its full sequence is S-ribosylhomocysteine lyase (172 aa).

Residues His54, His58, and Cys128 each coordinate Fe cation.

The protein belongs to the LuxS family. Homodimer. Requires Fe cation as cofactor.

The catalysed reaction is S-(5-deoxy-D-ribos-5-yl)-L-homocysteine = (S)-4,5-dihydroxypentane-2,3-dione + L-homocysteine. Functionally, involved in the synthesis of autoinducer 2 (AI-2) which is secreted by bacteria and is used to communicate both the cell density and the metabolic potential of the environment. The regulation of gene expression in response to changes in cell density is called quorum sensing. Catalyzes the transformation of S-ribosylhomocysteine (RHC) to homocysteine (HC) and 4,5-dihydroxy-2,3-pentadione (DPD). The chain is S-ribosylhomocysteine lyase from Aliivibrio salmonicida (strain LFI1238) (Vibrio salmonicida (strain LFI1238)).